Here is a 240-residue protein sequence, read N- to C-terminus: DNA repair protein RecO (240 aa).

This sequence belongs to the RecO family.

In terms of biological role, involved in DNA repair and RecF pathway recombination. The sequence is that of DNA repair protein RecO from Xanthomonas oryzae pv. oryzae (strain MAFF 311018).